The primary structure comprises 176 residues: 3-hydroxydecanoyl-[acyl-carrier-protein] dehydratase (176 aa).

The active site involves H71.

It belongs to the thioester dehydratase family. FabA subfamily. As to quaternary structure, homodimer.

The protein resides in the cytoplasm. It carries out the reaction a (3R)-hydroxyacyl-[ACP] = a (2E)-enoyl-[ACP] + H2O. The enzyme catalyses (3R)-hydroxydecanoyl-[ACP] = (2E)-decenoyl-[ACP] + H2O. The catalysed reaction is (2E)-decenoyl-[ACP] = (3Z)-decenoyl-[ACP]. It participates in lipid metabolism; fatty acid biosynthesis. Necessary for the introduction of cis unsaturation into fatty acids. Catalyzes the dehydration of (3R)-3-hydroxydecanoyl-ACP to E-(2)-decenoyl-ACP and then its isomerization to Z-(3)-decenoyl-ACP. Can catalyze the dehydratase reaction for beta-hydroxyacyl-ACPs with saturated chain lengths up to 16:0, being most active on intermediate chain length. This Rhodopseudomonas palustris (strain BisA53) protein is 3-hydroxydecanoyl-[acyl-carrier-protein] dehydratase.